Here is a 156-residue protein sequence, read N- to C-terminus: Small ribosomal subunit protein uS7 (156 aa).

This sequence belongs to the universal ribosomal protein uS7 family. In terms of assembly, part of the 30S ribosomal subunit. Contacts proteins S9 and S11.

In terms of biological role, one of the primary rRNA binding proteins, it binds directly to 16S rRNA where it nucleates assembly of the head domain of the 30S subunit. Is located at the subunit interface close to the decoding center, probably blocks exit of the E-site tRNA. This is Small ribosomal subunit protein uS7 from Listeria innocua serovar 6a (strain ATCC BAA-680 / CLIP 11262).